The chain runs to 520 residues: NADH-quinone oxidoreductase subunit N (520 aa).

14 helical membrane passes run 13–33 (ALLPEMLLSGGAMLLLLASVW), 55–75 (FGVILCLVVGLAVVIAWGDGA), 87–107 (GFRWAVDLVILLGTALALMLL), 115–135 (AAFGPEVPSLMLLASTGMMVL), 141–161 (LMFVFLGVELMSLAVYVLAGV), 176–196 (FLLGAISSGFLLYGMALLFGA), 219–239 (FMSGVALLLVGLAFKVAAAPF), 250–270 (APLPVTAFMSATVKTAAFAVF), 285–305 (WHMGLWWLAAVTMVVGNVFAL), 313–333 (MLAYSSIAHAGYLLVSIIVGD), 339–359 (ALIFYVVSYTLATMGAFGVLI), 383–403 (WLAIAMTVFLLAFMGMPVLGG), 425–445 (ILAVVLVIASAVSAAYYLAVV), and 468–488 (SLIATAAVALLVFGLYPTPIM). The span at 494-508 (ATTTTSPTSNPAAPR) shows a compositional bias: low complexity. The tract at residues 494–520 (ATTTTSPTSNPAAPRGEVRLQTASVPR) is disordered.

The protein belongs to the complex I subunit 2 family. NDH-1 is composed of 14 different subunits. Subunits NuoA, H, J, K, L, M, N constitute the membrane sector of the complex.

It localises to the cell inner membrane. The catalysed reaction is a quinone + NADH + 5 H(+)(in) = a quinol + NAD(+) + 4 H(+)(out). Functionally, NDH-1 shuttles electrons from NADH, via FMN and iron-sulfur (Fe-S) centers, to quinones in the respiratory chain. The immediate electron acceptor for the enzyme in this species is believed to be ubiquinone. Couples the redox reaction to proton translocation (for every two electrons transferred, four hydrogen ions are translocated across the cytoplasmic membrane), and thus conserves the redox energy in a proton gradient. This is NADH-quinone oxidoreductase subunit N from Gemmatimonas aurantiaca (strain DSM 14586 / JCM 11422 / NBRC 100505 / T-27).